Reading from the N-terminus, the 184-residue chain is 3-hydroxyanthranilate 3,4-dioxygenase (184 aa).

Residue Arg44 participates in O2 binding. Fe cation contacts are provided by His48, Glu54, and His92. Substrate is bound at residue Glu54. Substrate-binding residues include Arg96 and Glu106. A divalent metal cation-binding residues include Cys121, Cys126, Cys162, and Cys165.

It belongs to the 3-HAO family. Fe(2+) is required as a cofactor.

It localises to the cytoplasm. The enzyme catalyses 3-hydroxyanthranilate + O2 = (2Z,4Z)-2-amino-3-carboxymuconate 6-semialdehyde. It participates in cofactor biosynthesis; NAD(+) biosynthesis; quinolinate from L-kynurenine: step 3/3. In terms of biological role, catalyzes the oxidative ring opening of 3-hydroxyanthranilate to 2-amino-3-carboxymuconate semialdehyde, which spontaneously cyclizes to quinolinate. The polypeptide is 3-hydroxyanthranilate 3,4-dioxygenase (Pyricularia oryzae (strain 70-15 / ATCC MYA-4617 / FGSC 8958) (Rice blast fungus)).